Here is a 248-residue protein sequence, read N- to C-terminus: MAAGMYLEHYLDSIENLPFELQRNFQLMRDLDQRTEDLKAEIDKLASEYMSSARSRSSEEKLALLRQIQEAYGKCKEFGDDKVQLAMQTYEMVDKHIRRLDTDLARFEADLKEKQIESSDYDSSSSKGKKSRTQKEKKAARARSKGKNSDEEAPKAAQKKLKLVRTSPEYGMPSVTFGSVHPSDVLDMPVDPNEPTYCLCHQVSYGEMIGCDNPDCSIERFHFACVGLTTKPRGKWFCPRCSQERKKK.

A coiled-coil region spans residues 25–118 (FQLMRDLDQR…ADLKEKQIES (94 aa)). 3 positions are modified to N6-acetyllysine: lysine 112, lysine 127, and lysine 129. The segment at 115–160 (QIESSDYDSSSSKGKKSRTQKEKKAARARSKGKNSDEEAPKAAQKK) is disordered. Residues 127-147 (KGKKSRTQKEKKAARARSKGK) carry the Bipartite nuclear localization signal motif. The residue at position 132 (arginine 132) is a Citrulline. An N6-acetyllysine mark is found at lysine 145, lysine 147, and lysine 155. Arginine 165 is modified (citrulline). The PHD-type zinc-finger motif lies at 195-244 (PTYCLCHQVSYGEMIGCDNPDCSIERFHFACVGLTTKPRGKWFCPRCSQE). Zn(2+) is bound by residues cysteine 198, cysteine 200, cysteine 211, cysteine 216, histidine 222, cysteine 225, cysteine 238, and cysteine 241.

The protein belongs to the ING family. Homodimer. Component of the HBO1 complex composed of KAT7/HBO1, MEAF6, ING4 or ING5, and one scaffold subunit: complexes containing BRPF scaffold (BRPF1, BRD1/BRPF2 or BRPF3) direct KAT7/HBO1 specificity towards H3K14ac, while complexes containing JADE scaffold (JADE1, JADE2 and JADE3) mediate acetylation of histone H4. Interacts with H3K4me3 and to a lesser extent with H3K4me2, the interaction augments KAT7/HBO1 acetylation activity on H3 tails. Interacts with EP300, RELA and TP53; these interactions may be indirect. Interacts with EGLN1. Interacts with BCL2A1. Citrullination by PADI4 within the nuclear localization signal disrupts the interaction with p53 and increases susceptibility to degradation.

The protein resides in the nucleus. Component of HBO1 complexes, which specifically mediate acetylation of histone H3 at 'Lys-14' (H3K14ac), and have reduced activity toward histone H4. Through chromatin acetylation it may function in DNA replication. May inhibit tumor progression by modulating the transcriptional output of signaling pathways which regulate cell proliferation. Can suppress brain tumor angiogenesis through transcriptional repression of RELA/NFKB3 target genes when complexed with RELA. May also specifically suppress loss of contact inhibition elicited by activated oncogenes such as MYC. Represses hypoxia inducible factor's (HIF) activity by interacting with HIF prolyl hydroxylase 2 (EGLN1). Can enhance apoptosis induced by serum starvation in mammary epithelial cell line HC11. This Bos taurus (Bovine) protein is Inhibitor of growth protein 4 (ING4).